The following is a 61-amino-acid chain: Small ribosomal subunit protein uS14 (61 aa).

Zn(2+) is bound by residues Cys-24, Cys-27, Cys-40, and Cys-43.

This sequence belongs to the universal ribosomal protein uS14 family. Zinc-binding uS14 subfamily. In terms of assembly, part of the 30S ribosomal subunit. Contacts proteins S3 and S10. It depends on Zn(2+) as a cofactor.

In terms of biological role, binds 16S rRNA, required for the assembly of 30S particles and may also be responsible for determining the conformation of the 16S rRNA at the A site. The chain is Small ribosomal subunit protein uS14 from Dehalococcoides mccartyi (strain ATCC BAA-2266 / KCTC 15142 / 195) (Dehalococcoides ethenogenes (strain 195)).